A 124-amino-acid chain; its full sequence is Putative membrane protein insertion efficiency factor (124 aa).

Residues 1-12 (MCPQPHADHAIT) show a composition bias toward basic and acidic residues. The segment at 1-26 (MCPQPHADHAITRGDTGAAGGRNWSG) is disordered.

It belongs to the UPF0161 family.

The protein resides in the cell inner membrane. Its function is as follows. Could be involved in insertion of integral membrane proteins into the membrane. This chain is Putative membrane protein insertion efficiency factor, found in Rhizobium meliloti (strain 1021) (Ensifer meliloti).